Here is a 344-residue protein sequence, read N- to C-terminus: Anthranilate phosphoribosyltransferase (344 aa).

Residues Gly81, 84 to 85, Ser89, 91 to 94, 109 to 117, and Ala121 contribute to the 5-phospho-alpha-D-ribose 1-diphosphate site; these read GD, NIST, and KHGNRALSS. Gly81 is a binding site for anthranilate. Ser93 is a binding site for Mg(2+). Position 112 (Asn112) interacts with anthranilate. Anthranilate is bound at residue Arg167. 2 residues coordinate Mg(2+): Asp226 and Glu227.

The protein belongs to the anthranilate phosphoribosyltransferase family. Homodimer. Mg(2+) serves as cofactor.

The enzyme catalyses N-(5-phospho-beta-D-ribosyl)anthranilate + diphosphate = 5-phospho-alpha-D-ribose 1-diphosphate + anthranilate. It functions in the pathway amino-acid biosynthesis; L-tryptophan biosynthesis; L-tryptophan from chorismate: step 2/5. Functionally, catalyzes the transfer of the phosphoribosyl group of 5-phosphorylribose-1-pyrophosphate (PRPP) to anthranilate to yield N-(5'-phosphoribosyl)-anthranilate (PRA). This chain is Anthranilate phosphoribosyltransferase, found in Azorhizobium caulinodans (strain ATCC 43989 / DSM 5975 / JCM 20966 / LMG 6465 / NBRC 14845 / NCIMB 13405 / ORS 571).